We begin with the raw amino-acid sequence, 591 residues long: MLILNGFSSATLALITPPFLPKGGKALSQSGPDGLASITLPLPISAERGFAPALALPYSSGGGNGPFGVGWSCATMSIARRTSHGVPQYNDSDEFLGPDGEVLVQTLSTGDAPNPVTCFAYGDVSFPQSYTVTRYQPRTESSFYRLEYWVGNSNGDDFWLLHDSNGILHLLGKTAAARLSDPQAASHTAQWLVEESVTPAGEHIYYSYLAENGDNVDLNGNEAGRDRSAMRYLSKVQYGNATPAADLYLWTSATPAVQWLFTLVFDYGERGVDPQVPPAFTAQNSWLARQDPFSLYNYGFEIRLLRLCRQVLMFHHFPDELGEADTLVSRLLLEYDENPIRTQLCAARTLAYEGDGYRRAPVNNMMPPPPPPPMMGGNSSRPKSKWAIVEESKQIQALRYYSAQGYSVINKYLRGDDYPETQAKETLLSRDYLSTNEPSDEEFKNAMSVYINDIAEGLSSLPETDHRVVYRGLKLDKPALSDVLKEYTTIVNIIIDKAFMSTSPDKAWINDTILNIYLEKGHKGRILGDVAHFKGEAEMLFPPNTKLKIESIVNCGSQDFASQLSKLRLSDDATADTNRIKRIINMRVLNS.

A TR mART core domain is found at 373–576 (PMMGGNSSRP…LRLSDDATAD (204 aa)). Residues Arg-414 and 471–477 (RGLKLDK) contribute to the NAD(+) site. Catalysis depends on residues Arg-471, Ser-501, and Glu-538. NAD(+) is bound at residue Glu-538.

It belongs to the SpvB family.

It is found in the secreted. It catalyses the reaction L-arginyl-[protein] + NAD(+) = N(omega)-(ADP-D-ribosyl)-L-arginyl-[protein] + nicotinamide + H(+). With respect to regulation, inhibited by novobiocin. Functionally, mono-ADP-ribosylates eukaryotic muscle and non-muscle actin on 'Arg-177'. ADP-ribosylates all actins tested, has more activity on nonmuscle beta/gamma-actin than on muscle alpha-actin. Prefers monomeric G-actin but can weakly ADP-ribosylate F-actin. ADP-ribosylation prevents the polymerization of G-actin to F-actin, causing actin filament depolymerization, destruction of the cytoskeleton and cytotoxicity. Does not possess NAD(+)-glycohydrolase activity, unlike most mART enzymes. This chain is Mono(ADP-ribosyl)transferase SpvB (spvB), found in Salmonella typhimurium.